Reading from the N-terminus, the 222-residue chain is Small ribosomal subunit protein uS3 (222 aa).

In terms of domain architecture, KH type-2 spans 39–108 (IRKFVKNKLS…NVLINIVEVK (70 aa)).

The protein belongs to the universal ribosomal protein uS3 family. As to quaternary structure, part of the 30S ribosomal subunit. Forms a tight complex with proteins S10 and S14.

Binds the lower part of the 30S subunit head. Binds mRNA in the 70S ribosome, positioning it for translation. The sequence is that of Small ribosomal subunit protein uS3 from Clostridium acetobutylicum (strain ATCC 824 / DSM 792 / JCM 1419 / IAM 19013 / LMG 5710 / NBRC 13948 / NRRL B-527 / VKM B-1787 / 2291 / W).